The chain runs to 642 residues: MAEEAAPSESRAAGRLSLELCAEALPGRREEVGHEDTASHRRPRADPRRWASGLLLLLWLLEAPLLLGVRAQAAGQVSGPGQQAPPPPQPQQSGQQYNGERGISIPDHGYCQPISIPLCTDIAYNQTIMPNLLGHTNQEDAGLEVHQFYPLVKVQCSAELKFFLCSMYAPVCTVLEQALPPCRSLCERARQGCEALMNKFGFQWPDTLKCEKFPVHGAGELCVGQNTSDKGTPTPSLLPEFWTSNPQHGGGGYRGGYPGGAGTVERGKFSCPRALRVPSYLNYHFLGEKDCGAPCEPTKVYGLMYFGPEELRFSRTWIGIWSVLCCASTLFTVLTYLVDMRRFSYPERPIIFLSGCYTAVAVAYIAGFLLEDRVVCNDKFAEDGARTVAQGTKKEGCTILFMMLYFFSMASSIWWVILSLTWFLAAGMKWGHEAIEANSQYFHLAAWAVPAIKTITILALGQVDGDVLSGVCFVGLNNVDALRGFVLAPLFVYLFIGTSFLLAGFVSLFRIRTIMKHDGTKTEKLEKLMVRIGVFSVLYTVPATIVIACYFYEQAFRDQWERSWVAQSCKSYAIPCPHLQGGGGVPPHPPMSPDFTVFMIKYLMTLIVGITSGFWIWSGKTLNSWRKFYTRLTNSKQGETTV.

A signal peptide spans 1–68 (MAEEAAPSES…WLLEAPLLLG (68 aa)). Disordered regions lie at residues 26-45 (PGRREEVGHEDTASHRRPRA) and 76-99 (QVSGPGQQAPPPPQPQQSGQQYNG). The Extracellular segment spans residues 69-317 (VRAQAAGQVS…PEELRFSRTW (249 aa)). The FZ domain maps to 106-225 (PDHGYCQPIS…HGAGELCVGQ (120 aa)). Cystine bridges form between C111-C172, C119-C165, C156-C193, C182-C222, and C186-C210. N-linked (GlcNAc...) asparagine glycosylation occurs at N125. A glycan (N-linked (GlcNAc...) asparagine) is linked at N226. A helical transmembrane segment spans residues 318 to 338 (IGIWSVLCCASTLFTVLTYLV). At 339 to 349 (DMRRFSYPERP) the chain is on the cytoplasmic side. A helical membrane pass occupies residues 350–370 (IIFLSGCYTAVAVAYIAGFLL). Topologically, residues 371–397 (EDRVVCNDKFAEDGARTVAQGTKKEGC) are extracellular. The helical transmembrane segment at 398-418 (TILFMMLYFFSMASSIWWVIL) threads the bilayer. Residues 419 to 440 (SLTWFLAAGMKWGHEAIEANSQ) lie on the Cytoplasmic side of the membrane. Residues 441–461 (YFHLAAWAVPAIKTITILALG) traverse the membrane as a helical segment. Over 462–484 (QVDGDVLSGVCFVGLNNVDALRG) the chain is Extracellular. A helical transmembrane segment spans residues 485–505 (FVLAPLFVYLFIGTSFLLAGF). Residues 506 to 531 (VSLFRIRTIMKHDGTKTEKLEKLMVR) lie on the Cytoplasmic side of the membrane. A helical transmembrane segment spans residues 532–552 (IGVFSVLYTVPATIVIACYFY). The Extracellular portion of the chain corresponds to 553-593 (EQAFRDQWERSWVAQSCKSYAIPCPHLQGGGGVPPHPPMSP). Residues 594–614 (DFTVFMIKYLMTLIVGITSGF) form a helical membrane-spanning segment. Residues 615–642 (WIWSGKTLNSWRKFYTRLTNSKQGETTV) lie on the Cytoplasmic side of the membrane. A Lys-Thr-X-X-X-Trp motif, mediates interaction with the PDZ domain of Dvl family members motif is present at residues 620–625 (KTLNSW). The short motif at 640-642 (TTV) is the PDZ-binding element.

This sequence belongs to the G-protein coupled receptor Fz/Smo family. Interacts with MYOC. Interacts with WNT7B. In terms of processing, ubiquitinated by ZNRF3, leading to its degradation by the proteasome. Expressed in chondrocytes.

The protein resides in the cell membrane. Receptor for Wnt proteins. Activated by WNT7B. Activated by WNT3A, WNT3, WNT1 and to a lesser extent WNT2, but apparently not by WNT4, WNT5A, WNT5B, WNT6, WNT7A or WNT7B. Contradictory results showing activation by WNT7B have been described for mouse. Functions in the canonical Wnt/beta-catenin signaling pathway. The canonical Wnt/beta-catenin signaling pathway leads to the activation of disheveled proteins, inhibition of GSK-3 kinase, nuclear accumulation of beta-catenin and activation of Wnt target genes. A second signaling pathway involving PKC and calcium fluxes has been seen for some family members, but it is not yet clear if it represents a distinct pathway or if it can be integrated in the canonical pathway, as PKC seems to be required for Wnt-mediated inactivation of GSK-3 kinase. Both pathways seem to involve interactions with G-proteins. May be involved in transduction and intercellular transmission of polarity information during tissue morphogenesis and/or in differentiated tissues. This is Frizzled-1 (Fzd1) from Mus musculus (Mouse).